The sequence spans 314 residues: Transcriptional activator RhrA (314 aa).

The 101-residue stretch at 210–310 folds into the HTH araC/xylS-type domain; the sequence is ASIKMRVEQN…GVRPSDLRRL (101 aa). 2 DNA-binding regions (H-T-H motif) span residues 228-249 and 277-300; these read TDVA…SREG and ISQI…RSRY.

In terms of biological role, transcriptional activator of the rhizobactin regulon. The sequence is that of Transcriptional activator RhrA (rhrA) from Rhizobium meliloti (strain 1021) (Ensifer meliloti).